A 295-amino-acid polypeptide reads, in one-letter code: Energy-coupling factor transporter ATP-binding protein EcfA2 (295 aa).

In terms of domain architecture, ABC transporter spans 3-246; that stretch reads ITFKQVDFTY…PAWLTAHQLG (244 aa). 40–47 is a binding site for ATP; the sequence is GHTGSGKS.

Belongs to the ABC transporter superfamily. Energy-coupling factor EcfA family. As to quaternary structure, forms a stable energy-coupling factor (ECF) transporter complex composed of 2 membrane-embedded substrate-binding proteins (S component), 2 ATP-binding proteins (A component) and 2 transmembrane proteins (T component).

It localises to the cell membrane. Functionally, ATP-binding (A) component of a common energy-coupling factor (ECF) ABC-transporter complex. Unlike classic ABC transporters this ECF transporter provides the energy necessary to transport a number of different substrates. The polypeptide is Energy-coupling factor transporter ATP-binding protein EcfA2 (Lactiplantibacillus plantarum (strain ATCC BAA-793 / NCIMB 8826 / WCFS1) (Lactobacillus plantarum)).